A 69-amino-acid chain; its full sequence is Small integral membrane protein 20 (69 aa).

The Mitochondrial matrix portion of the chain corresponds to 1–8; sequence MAAARNLR. The helical transmembrane segment at 9–29 threads the bilayer; the sequence is TALIFGGFISMVGAAFYPIYF. The Mitochondrial intermembrane portion of the chain corresponds to 30-69; that stretch reads RPLMRLEEYQKEQAVNRAGIVQEDVQPPGLKVWSDPFGRK. Phe66 is modified (phenylalanine amide).

Component of the MITRAC (mitochondrial translation regulation assembly intermediate of cytochrome c oxidase complex) complex, the core components of this complex being COA3/MITRAC12 and COX14. Interacts with COA3/MITRAC12 and COX4I1. Directly interacts with newly synthesized MT-CO1/COX1. Highly expressed in the hypothalamus, the spinal cord, and sensory ganglia (at protein level). Also expressed on in the epidermis and dermis layers of the skin (at protein level). Expressed in preadipocytes and adipocytes (at protein level). Expressed in the ovary, specifically in granulosa cells of follicles that have passed the primary stage and in oocytes (at protein level).

It is found in the mitochondrion inner membrane. It localises to the secreted. Its function is as follows. Component of the MITRAC (mitochondrial translation regulation assembly intermediate of cytochrome c oxidase complex) complex, that regulates cytochrome c oxidase assembly. Promotes the progression of complex assembly after the association of MT-CO1/COX1 with COX4I1 and COX6C. Chaperone-like assembly factor required to stabilize newly synthesized MT-CO1/COX1 and to prevent its premature turnover. Peptide involved in a broad spectrum of regulatory functions. Is a ligand for GPR173. As part of the reproductive cycle, it regulates gonadotropin-releasing hormone (GnRH) signaling in the hypothalamus and pituitary gland which augments the release of luteinizing hormone. More specifically, it regulates the expression of transcription factors CEBPB and POU2F1/OCT1 through the cAMP-PKA signaling pathway, which subsequently regulate the expression of GNRHR and KISS1. Plays a protective role in memory retention through activation of GNRHR. Regulates the secretion of AVP by hypothalamic neurons. Plays a role in the transduction of the itch sensation. Induces anxiolytic effects, reducing behavior associated with anxiety. Regulates food intake as well as satiation and satiety by increasing Nucb2 expression in neurons. In the ovary, it regulates follicular growth by stimulating granulosa cell proliferation by increasing the expression of GPR173, CREB1, CYP19A1, KITLG, FSHR, and LHCGR. It also increases the production of estradiol (E2). In the heart, it regulates contractility and relaxation by activating the AKT1-NOS3 and MAPK1-MAPK3 signaling pathways. It also plays a cardioprotective role during ischemia, where it activates the SAFE and RISK pathways. Stimulates the proliferation and differentiation of preadipocytes. In pancreatic islet cells, it induces proliferation of islet cells as well as the production of INS through activation of the MAPK1-MAPK3 signaling pathways. The protein is Small integral membrane protein 20 of Mus musculus (Mouse).